A 216-amino-acid polypeptide reads, in one-letter code: Adenylate kinase (216 aa).

10 to 15 (GAGKGT) lines the ATP pocket. Residues 30-59 (STGDMFRAAMKNETALGLEAKSYIDKGELV) are NMP. AMP is bound by residues T31, R36, 57-59 (ELV), 85-88 (GFPR), and Q92. An LID region spans residues 126 to 164 (GRFICRTCGATYHKLFNPPKVEGTCDRCGGHEFYQREDD). R127 is an ATP binding site. C130 and C133 together coordinate Zn(2+). 136–137 (TY) contributes to the ATP binding site. Zn(2+)-binding residues include C150 and C153. AMP contacts are provided by R161 and R172. R200 contacts ATP.

The protein belongs to the adenylate kinase family. In terms of assembly, monomer.

It is found in the cytoplasm. It catalyses the reaction AMP + ATP = 2 ADP. Its pathway is purine metabolism; AMP biosynthesis via salvage pathway; AMP from ADP: step 1/1. Its function is as follows. Catalyzes the reversible transfer of the terminal phosphate group between ATP and AMP. Plays an important role in cellular energy homeostasis and in adenine nucleotide metabolism. The sequence is that of Adenylate kinase from Enterococcus faecalis (strain ATCC 700802 / V583).